The primary structure comprises 265 residues: Type II pantothenate kinase (265 aa).

Position 6–13 (6–13) interacts with ATP; the sequence is DAGGTLIK. Residue E70 is the Proton acceptor of the active site. ATP contacts are provided by residues T99, 121-125, Y137, and S225; that span reads GGMIQ.

The protein belongs to the type II pantothenate kinase family. As to quaternary structure, homodimer.

Its subcellular location is the cytoplasm. It carries out the reaction (R)-pantothenate + ATP = (R)-4'-phosphopantothenate + ADP + H(+). It participates in cofactor biosynthesis; coenzyme A biosynthesis; CoA from (R)-pantothenate: step 1/5. In terms of biological role, catalyzes the phosphorylation of pantothenate (Pan), the first step in CoA biosynthesis. This is Type II pantothenate kinase from Staphylococcus epidermidis (strain ATCC 35984 / DSM 28319 / BCRC 17069 / CCUG 31568 / BM 3577 / RP62A).